Consider the following 607-residue polypeptide: UvrABC system protein C (607 aa).

One can recognise a GIY-YIG domain in the interval G16–I94. The 36-residue stretch at Q203–V238 folds into the UVR domain.

The protein belongs to the UvrC family. Interacts with UvrB in an incision complex.

The protein localises to the cytoplasm. In terms of biological role, the UvrABC repair system catalyzes the recognition and processing of DNA lesions. UvrC both incises the 5' and 3' sides of the lesion. The N-terminal half is responsible for the 3' incision and the C-terminal half is responsible for the 5' incision. The chain is UvrABC system protein C from Pseudomonas putida (strain ATCC 47054 / DSM 6125 / CFBP 8728 / NCIMB 11950 / KT2440).